The primary structure comprises 428 residues: Glucose-1-phosphate adenylyltransferase (428 aa).

Residues Tyr114, Gly179, 194–195 (EK), and Ser212 contribute to the alpha-D-glucose 1-phosphate site.

Belongs to the bacterial/plant glucose-1-phosphate adenylyltransferase family. In terms of assembly, homotetramer.

The catalysed reaction is alpha-D-glucose 1-phosphate + ATP + H(+) = ADP-alpha-D-glucose + diphosphate. Its pathway is glycan biosynthesis; glycogen biosynthesis. In terms of biological role, involved in the biosynthesis of ADP-glucose, a building block required for the elongation reactions to produce glycogen. Catalyzes the reaction between ATP and alpha-D-glucose 1-phosphate (G1P) to produce pyrophosphate and ADP-Glc. This chain is Glucose-1-phosphate adenylyltransferase, found in Yersinia pseudotuberculosis serotype O:1b (strain IP 31758).